A 373-amino-acid polypeptide reads, in one-letter code: Anhydro-N-acetylmuramic acid kinase (373 aa).

ATP is bound at residue 12 to 19 (GTSLDGVD).

This sequence belongs to the anhydro-N-acetylmuramic acid kinase family.

The enzyme catalyses 1,6-anhydro-N-acetyl-beta-muramate + ATP + H2O = N-acetyl-D-muramate 6-phosphate + ADP + H(+). The protein operates within amino-sugar metabolism; 1,6-anhydro-N-acetylmuramate degradation. It participates in cell wall biogenesis; peptidoglycan recycling. Its function is as follows. Catalyzes the specific phosphorylation of 1,6-anhydro-N-acetylmuramic acid (anhMurNAc) with the simultaneous cleavage of the 1,6-anhydro ring, generating MurNAc-6-P. Is required for the utilization of anhMurNAc either imported from the medium or derived from its own cell wall murein, and thus plays a role in cell wall recycling. The protein is Anhydro-N-acetylmuramic acid kinase of Erwinia tasmaniensis (strain DSM 17950 / CFBP 7177 / CIP 109463 / NCPPB 4357 / Et1/99).